Here is an 82-residue protein sequence, read N- to C-terminus: Sigma-G-dependent sporulation-specific SASP protein (82 aa).

The chain is Sigma-G-dependent sporulation-specific SASP protein from Bacillus subtilis (strain 168).